Here is a 517-residue protein sequence, read N- to C-terminus: Benzoate 4-monooxygenase bphA (517 aa).

The helical transmembrane segment at 4–24 threads the bilayer; that stretch reads LLLSPYGAYLGLALLVLYYLL. N-linked (GlcNAc...) asparagine glycosylation is found at Asn-282 and Asn-325. Heme is bound at residue Cys-461.

Belongs to the cytochrome P450 family. It depends on heme as a cofactor.

The protein localises to the membrane. The catalysed reaction is benzoate + reduced [NADPH--hemoprotein reductase] + O2 = 4-hydroxybenzoate + oxidized [NADPH--hemoprotein reductase] + H2O + H(+). In terms of biological role, cytochrome P450 monooxygenase; part of the benzoic acid degradation pathway also known as the protocatechuic acid pathway. Benzoic acid debradation begins with the conversion of benzoic acid into 4-hydroxybenzoic acid through hydroxylation by the benzoate-4-monooxygenase bphA, and its partner NADPH-cytochrome P450 reductase cprA which act as a mediator in electron donation from NADPH. 4-Hydroxybenzoic acid is then converted into 3,4-dihydroxybenzoic acid (also called protocatechuic acid) by the p-hydroxybenzoate-m-hydroxylase phhA. Protocatechuic acid is converted into 3-carboxy-cis,cis-muconic acid by the intradiol ring-cleavage dioxygenase prcA, which is further metabolized through the 3-oxoadipate pathway to finally enter the tricarboxylic acid cycle (TCA). This chain is Benzoate 4-monooxygenase bphA, found in Aspergillus niger (strain ATCC MYA-4892 / CBS 513.88 / FGSC A1513).